Reading from the N-terminus, the 154-residue chain is Endoribonuclease YbeY (154 aa).

Zn(2+) contacts are provided by H113, H117, and H123.

This sequence belongs to the endoribonuclease YbeY family. Zn(2+) serves as cofactor.

Its subcellular location is the cytoplasm. Functionally, single strand-specific metallo-endoribonuclease involved in late-stage 70S ribosome quality control and in maturation of the 3' terminus of the 16S rRNA. This Verminephrobacter eiseniae (strain EF01-2) protein is Endoribonuclease YbeY.